The following is a 427-amino-acid chain: MIKIIGAGLAGSEAAYYLANKGYKVKLYEMRPKKNTPAHVTKNFAELVCSNSFRSNDPLNAVGLLKVEMTHFNSLILEAANIHKVPAGSSLAVDRNLFSEYVTEKIKSHENIEVIHEEVTSLDPNEYTIIAAGPLASDLLSKQIQDHLHLESLNFFDAVAPIIDAKSINMDIAYLKSRYDKDEAAYINCPMNKQEYLEFYKALMTAESVAPKDFENNVFEGCMPVEDMGKRGIDTLRFGPLKPVGLTKPNGEKPYAVVQLRQDDVNKTMYNMVGFQTHMKWGDQKRVIQMIPGLENAEILRYGVIHKNTYLESPKHLNNAFQVRDIPKWFFAGQISGVEGYIESAASGLNVAINLHNLLTKGEIRPLPVDTMMGAMARYISNYHQYFVPMNANFGLFDQIEAHKTVRKQMYYDRSMHALKEYIEGGI.

6–11 provides a ligand contact to FAD; that stretch reads GAGLAG.

Belongs to the MnmG family. TrmFO subfamily. FAD is required as a cofactor.

The protein resides in the cytoplasm. It catalyses the reaction uridine(54) in tRNA + (6R)-5,10-methylene-5,6,7,8-tetrahydrofolate + NADH + H(+) = 5-methyluridine(54) in tRNA + (6S)-5,6,7,8-tetrahydrofolate + NAD(+). The catalysed reaction is uridine(54) in tRNA + (6R)-5,10-methylene-5,6,7,8-tetrahydrofolate + NADPH + H(+) = 5-methyluridine(54) in tRNA + (6S)-5,6,7,8-tetrahydrofolate + NADP(+). Catalyzes the folate-dependent formation of 5-methyl-uridine at position 54 (M-5-U54) in all tRNAs. The protein is Methylenetetrahydrofolate--tRNA-(uracil-5-)-methyltransferase TrmFO of Acholeplasma laidlawii (strain PG-8A).